A 161-amino-acid chain; its full sequence is Peptidyl-prolyl cis-trans isomerase-like 3 (161 aa).

An N-acetylserine modification is found at serine 2. The PPIase cyclophilin-type domain occupies 2–154 (SVTLHTDVGD…NDVHIKDITI (153 aa)). Arginine 61 is subject to Omega-N-methylarginine.

It belongs to the cyclophilin-type PPIase family. PPIL3 subfamily. As to quaternary structure, identified in the spliceosome C complex. Ubiquitous. Detected at low levels.

It carries out the reaction [protein]-peptidylproline (omega=180) = [protein]-peptidylproline (omega=0). In terms of biological role, PPIases accelerate the folding of proteins. It catalyzes the cis-trans isomerization of proline imidic peptide bonds in oligopeptides. May be involved in pre-mRNA splicing. In Homo sapiens (Human), this protein is Peptidyl-prolyl cis-trans isomerase-like 3 (PPIL3).